The following is a 533-amino-acid chain: uncharacterized protein (533 aa).

The tract at residues 1–26 (MKRFFSKLFSKSPTSGRVPSPDSDYS) is disordered. A phosphoserine mark is found at serine 20 and serine 23. At tyrosine 25 the chain carries Phosphotyrosine. Phosphoserine is present on serine 26. A run of 10 helical transmembrane segments spans residues 178–198 (ILAVLHIPVALIWLNLEHILI), 213–230 (YMRVFILAAPGYAVFEAL), 242–264 (PITYVLCFAAPLNILLNYLLVWH), 274–296 (APVAVATTFWFQSICLILYICFS), 313–333 (LSPMLHFSFHGMLMIVTEWAA), 353–373 (SILLTSTSLLFQIPFAFAVAS), 394–414 (RVAYSLALCISIFDGSLIFCF), 435–455 (IFPILSLFIVTDGLNAVGGGL), 466–486 (GLISIGSSYLFALPVTVFVVV), and 495–515 (IWCGMILSSVTAITCQFTVLF).

The protein belongs to the multi antimicrobial extrusion (MATE) (TC 2.A.66.1) family.

It localises to the vacuole membrane. This is an uncharacterized protein from Schizosaccharomyces pombe (strain 972 / ATCC 24843) (Fission yeast).